The following is a 648-amino-acid chain: MSDAVTDADGSSAQSHAQSAGHHAVQGHGGHSQGPLLKLAVGAIGVVFGDIGTSPLYALRDTFAGHHKLPLDLLHIYGIISLMFWSMMIIVTFKYVSVIMRADNKGEGGSLALLALINQHTDGKRWGRGIILLGVFATALFYGDSMITPAVSVMGAIEGVAVYRPDMHPLIVPLVVGILIGLFFIQSRGTEKVAAFFGPIMLVYFGTIAVLGALSIAEYPPVIAALSPHHAVTMFIADPWRGFLAMGAAVLAVTGAEALYADMGHFGRSPIRMSWLVFVLPALVLNYLGQASLLIRNPAALESPFYYLAPEWFQWPLLFIASCAAVIASQAVISGAFSVTQQAIQLGFIPRMTIKHTSTAAGQIFIPVINWALMIAVILLVLVFQRSSNLTAAYGIAVTGAMLIDNFLLAVVLFKLWQWKAPAAIAMLAVFFAIDAAYLGANMTKIPDGGWVPLVMGIAIFTLLTTWSRGRALMRENMAEGTIPLDVFTKSAHSSAARVSGTAIFMASTAAGVPSALLHNIKHNKVLHERVVILTVSIEDVPYVDEGERYSVKDFGNGFYRLTLRFGFLEETDVPGALKGVSMCGEPFNMMKTSFFLSRQTLIPSDKPGMALWREKLFAWMLRNAASAMEFFRLPTNRVVELGSQLKI.

The segment at 1 to 31 (MSDAVTDADGSSAQSHAQSAGHHAVQGHGGH) is disordered. Over residues 10–26 (GSSAQSHAQSAGHHAVQ) the composition is skewed to low complexity. The next 12 membrane-spanning stretches (helical) occupy residues 39–59 (LAVGAIGVVFGDIGTSPLYAL), 73–93 (LLHIYGIISLMFWSMMIIVTF), 130–150 (IILLGVFATALFYGDSMITPA), 165–185 (PDMHPLIVPLVVGILIGLFFI), 193–213 (VAAFFGPIMLVYFGTIAVLGA), 243–263 (FLAMGAAVLAVTGAEALYADM), 275–295 (WLVFVLPALVLNYLGQASLLI), 317–337 (LLFIASCAAVIASQAVISGAF), 364–384 (IFIPVINWALMIAVILLVLVF), 394–414 (YGIAVTGAMLIDNFLLAVVLF), 421–441 (APAAIAMLAVFFAIDAAYLGA), and 446–466 (IPDGGWVPLVMGIAIFTLLTT).

It belongs to the HAK/KUP transporter (TC 2.A.72) family.

The protein localises to the cell inner membrane. The catalysed reaction is K(+)(in) + H(+)(in) = K(+)(out) + H(+)(out). Functionally, transport of potassium into the cell. Likely operates as a K(+):H(+) symporter. This is Probable potassium transport system protein Kup 1 from Novosphingobium aromaticivorans (strain ATCC 700278 / DSM 12444 / CCUG 56034 / CIP 105152 / NBRC 16084 / F199).